A 40-amino-acid chain; its full sequence is U4-ctenitoxin-Co1c (40 aa).

Intrachain disulfides connect cysteine 3-cysteine 20, cysteine 10-cysteine 26, cysteine 19-cysteine 40, and cysteine 28-cysteine 38.

Expressed by the venom gland.

It localises to the secreted. Its function is as follows. Not toxic to mice by intracerebroventricular injection. The protein is U4-ctenitoxin-Co1c of Ctenus ornatus (Brazilian spider).